Here is a 247-residue protein sequence, read N- to C-terminus: MLPTFVRFSRIMSSGIEHAKRMAAYKAVDANFPPHAKVVGIGSGSTVVYVAERIGQLKNKHDFVCISTGFQSKQLIIDNGLTLGAIEQFPKVDIAFDGADEVDTNLNLIKGGGACLFQEKLVASSADKFIVVADTRKKSPSDLGIAWRKGVPIEVVPNSYAVVTRQLKELGAKSVVLRQGGGAKAGPVVTDNNNFLIDADFGSISDPGSLHQQIKLLVGVVETGLFVDMAHTAYFGDESGEVSEQSR.

The protein belongs to the ribose 5-phosphate isomerase family.

Its subcellular location is the cytoplasm. The enzyme catalyses aldehydo-D-ribose 5-phosphate = D-ribulose 5-phosphate. Its pathway is carbohydrate degradation; pentose phosphate pathway; D-ribose 5-phosphate from D-ribulose 5-phosphate (non-oxidative stage): step 1/1. This is Ribose-5-phosphate isomerase (RKI1) from Meyerozyma guilliermondii (strain ATCC 6260 / CBS 566 / DSM 6381 / JCM 1539 / NBRC 10279 / NRRL Y-324) (Yeast).